Reading from the N-terminus, the 209-residue chain is ATP-dependent dethiobiotin synthetase BioD (209 aa).

13 to 18 (DVGKTV) provides a ligand contact to ATP. Thr-17 lines the Mg(2+) pocket. Lys-33 is a catalytic residue. Glu-100 contacts Mg(2+). Residues 100-103 (EGAG) and 184-186 (PRL) contribute to the ATP site.

This sequence belongs to the dethiobiotin synthetase family. As to quaternary structure, homodimer. The cofactor is Mg(2+).

It localises to the cytoplasm. It catalyses the reaction (7R,8S)-7,8-diammoniononanoate + CO2 + ATP = (4R,5S)-dethiobiotin + ADP + phosphate + 3 H(+). The protein operates within cofactor biosynthesis; biotin biosynthesis; biotin from 7,8-diaminononanoate: step 1/2. Functionally, catalyzes a mechanistically unusual reaction, the ATP-dependent insertion of CO2 between the N7 and N8 nitrogen atoms of 7,8-diaminopelargonic acid (DAPA, also called 7,8-diammoniononanoate) to form a ureido ring. The polypeptide is ATP-dependent dethiobiotin synthetase BioD (Rhizorhabdus wittichii (strain DSM 6014 / CCUG 31198 / JCM 15750 / NBRC 105917 / EY 4224 / RW1) (Sphingomonas wittichii)).